Consider the following 144-residue polypeptide: 3-dehydroquinate dehydratase (144 aa).

The active-site Proton acceptor is Tyr22. Residues Asn71, His77, and Asp84 each coordinate substrate. His97 acts as the Proton donor in catalysis. Substrate-binding positions include 98–99 (IS) and Arg108.

It belongs to the type-II 3-dehydroquinase family. In terms of assembly, homododecamer.

It carries out the reaction 3-dehydroquinate = 3-dehydroshikimate + H2O. It participates in metabolic intermediate biosynthesis; chorismate biosynthesis; chorismate from D-erythrose 4-phosphate and phosphoenolpyruvate: step 3/7. In terms of biological role, catalyzes a trans-dehydration via an enolate intermediate. The polypeptide is 3-dehydroquinate dehydratase (aroQ) (Thermotoga maritima (strain ATCC 43589 / DSM 3109 / JCM 10099 / NBRC 100826 / MSB8)).